The chain runs to 509 residues: Putative cytochrome P450 CYP13A8 (509 aa).

Heme is bound at residue C455.

It belongs to the cytochrome P450 family. Heme serves as cofactor.

Its function is as follows. Cytochromes P450 are a group of heme-thiolate monooxygenases. They oxidize a variety of structurally unrelated compounds, including steroids, fatty acids, and xenobiotics. The protein is Putative cytochrome P450 CYP13A8 (cyp-13A8) of Caenorhabditis elegans.